Reading from the N-terminus, the 424-residue chain is MRHDDVFRLNEPRRVAVLAVHTSPLAQPGTGDAGGMNVYVLQTALHLARRGIEVEIFTRATASADPPVQRVVPGVVVRNVVAGPFEGLDKYDLPTQLCAFAAGVLRAEASHEPGYYDIVHSHYWLSGQVGWLARDRWAVPLVHTAHTLAAVKNAALAQGDSPEPPLRTVGEQQVVDEADRLIVNTDDEARQLISIHHADPARIDVVHPGVDLDVFRPGDRRAARAALGLPLDEDIVAFVGRIQPLKAPDIVLRAAAKLPGVRIVVAGGPSGTGLASPDGLALLADELGISARVTFLPPQSRPNLATLFQAANLVAVPSYSESFGLVALEAQACGTPVAAAAVGGLPVAVRDGVTGTLVAGHDVDHWADALAGLLRAPAPAAAAMSRAAAAHAATFSWDHTTDALLASYRRAIREYTTERRGVGA.

H21 lines the 1D-myo-inositol 3-phosphate pocket. Residues 27-28 (QP) and G35 contribute to the UDP-N-acetyl-alpha-D-glucosamine site. 1D-myo-inositol 3-phosphate is bound by residues 32-37 (DAGGMN), K90, Y123, T147, and R167. Positions 241, 246, and 299 each coordinate UDP-N-acetyl-alpha-D-glucosamine. Mg(2+) contacts are provided by F308, Q309, and A311. Residues E321 and E329 each coordinate UDP-N-acetyl-alpha-D-glucosamine. Position 335 (T335) interacts with Mg(2+).

It belongs to the glycosyltransferase group 1 family. MshA subfamily. In terms of assembly, homodimer.

It carries out the reaction 1D-myo-inositol 3-phosphate + UDP-N-acetyl-alpha-D-glucosamine = 1D-myo-inositol 2-acetamido-2-deoxy-alpha-D-glucopyranoside 3-phosphate + UDP + H(+). Functionally, catalyzes the transfer of a N-acetyl-glucosamine moiety to 1D-myo-inositol 3-phosphate to produce 1D-myo-inositol 2-acetamido-2-deoxy-glucopyranoside 3-phosphate in the mycothiol biosynthesis pathway. The sequence is that of D-inositol 3-phosphate glycosyltransferase from Mycobacterium avium (strain 104).